The primary structure comprises 581 residues: Colicin-E2 (581 aa).

Disordered regions lie at residues 1–74, 242–269, 293–320, 421–488, and 513–566; these read MSGG…SGGG, QTLS…NTRD, PDQV…EAAE, ADAA…IADK, and DLSK…MNNI. A compositionally biased stretch (gly residues) spans 20-35; that stretch reads INGGPTGLGVGGGASD. Positions 36–45 are enriched in low complexity; that stretch reads GSGWSSENNP. Residues 46–74 show a composition bias toward gly residues; it reads WGGGSGSGIHWGGGSGHGNGGGNGNSGGG. The span at 242–251 shows a compositional bias: polar residues; it reads QTLSPGVTNN. 3 stretches are compositionally biased toward basic and acidic residues: residues 296–320, 429–452, and 464–475; these read VKQR…EAAE, QERR…ESKR, and PVGDKWLDDAGK. Residues 518 to 527 are compositionally biased toward polar residues; it reads FKGSNKTNIQ. The segment covering 535–554 has biased composition (basic and acidic residues); it reads RKKDQVGGRERFELHHDKPI. The Zn(2+) site is built by H549, H574, and H578.

The protein belongs to the colicin/pyosin nuclease family.

This plasmid-coded bactericidal protein is an endonuclease active on both single- and double-stranded DNA but with undefined specificity. Its function is as follows. Colicins are polypeptide toxins produced by and active against E.coli and closely related bacteria. The protein is Colicin-E2 (col) of Escherichia coli.